Here is a 250-residue protein sequence, read N- to C-terminus: Proteasome subunit alpha type-4-A (250 aa).

Residues lysine 40 and lysine 64 each participate in a glycyl lysine isopeptide (Lys-Gly) (interchain with G-Cter in ubiquitin) cross-link.

Belongs to the peptidase T1A family. As to quaternary structure, component of the 20S core complex of the 26S proteasome. The 26S proteasome is composed of a core protease (CP), known as the 20S proteasome, capped at one or both ends by the 19S regulatory particle (RP/PA700). The 20S proteasome core is composed of 28 subunits that are arranged in four stacked rings, resulting in a barrel-shaped structure. The two end rings are each formed by seven alpha subunits, and the two central rings are each formed by seven beta subunits. The catalytic chamber with the active sites is on the inside of the barrel. As to expression, ubiquitous low levels, higher expression in siliques and flowers.

The protein localises to the cytoplasm. It is found in the nucleus. In terms of biological role, the proteasome is a multicatalytic proteinase complex which is characterized by its ability to cleave peptides with Arg, Phe, Tyr, Leu, and Glu adjacent to the leaving group at neutral or slightly basic pH. The proteasome has an ATP-dependent proteolytic activity. The polypeptide is Proteasome subunit alpha type-4-A (PAC1) (Arabidopsis thaliana (Mouse-ear cress)).